A 133-amino-acid chain; its full sequence is Probable 4-amino-4-deoxy-L-arabinose-phosphoundecaprenol flippase subunit ArnF (133 aa).

At 1-5 (MKTGY) the chain is on the cytoplasmic side. A helical transmembrane segment spans residues 6–26 (LWAIASALLVTVAQLLLKIGM). Topologically, residues 27-47 (SELPDLQLEKQWFDLHWLWAN) are periplasmic. A helical membrane pass occupies residues 48 to 68 (IIPISVVFVGLIGYVLSMVCW). The EamA domain occupies 51–125 (ISVVFVGLIG…IMLGVWLISQ (75 aa)). The Cytoplasmic portion of the chain corresponds to 69–80 (LLTLRTIPLNKA). The chain crosses the membrane as a helical span at residues 81-101 (YPLISLSYVFVYILAVVLPWF). Topologically, residues 102-103 (QE) are periplasmic. The chain crosses the membrane as a helical span at residues 104–124 (TLSWSKTIGIIFIMLGVWLIS). Topologically, residues 125-133 (QKTEQTTSH) are cytoplasmic.

It belongs to the ArnF family. In terms of assembly, heterodimer of ArnE and ArnF.

The protein resides in the cell inner membrane. The protein operates within bacterial outer membrane biogenesis; lipopolysaccharide biosynthesis. Its function is as follows. Translocates 4-amino-4-deoxy-L-arabinose-phosphoundecaprenol (alpha-L-Ara4N-phosphoundecaprenol) from the cytoplasmic to the periplasmic side of the inner membrane. The chain is Probable 4-amino-4-deoxy-L-arabinose-phosphoundecaprenol flippase subunit ArnF from Proteus mirabilis (strain HI4320).